The sequence spans 124 residues: Fluoride-specific ion channel FluC (124 aa).

The next 4 helical transmembrane spans lie at 5–27 (LFVA…LMLQ), 42–62 (ILGS…EVSP), 63–83 (EIKA…STFS), and 95–115 (LVKA…VVYL). Na(+) contacts are provided by glycine 74 and threonine 77.

This sequence belongs to the fluoride channel Fluc/FEX (TC 1.A.43) family.

It localises to the cell inner membrane. It catalyses the reaction fluoride(in) = fluoride(out). Na(+) is not transported, but it plays an essential structural role and its presence is essential for fluoride channel function. Functionally, fluoride-specific ion channel. Important for reducing fluoride concentration in the cell, thus reducing its toxicity. The protein is Fluoride-specific ion channel FluC of Shewanella piezotolerans (strain WP3 / JCM 13877).